Reading from the N-terminus, the 351-residue chain is ATP-dependent 6-phosphofructokinase subunit gamma (351 aa).

As to quaternary structure, heterododecamer of 4 alpha, 4 beta and 4 gamma chains. The gamma chain bridges the N-terminal halves of the alpha and beta subunits.

The protein resides in the cytoplasm. Its pathway is carbohydrate degradation; glycolysis; D-glyceraldehyde 3-phosphate and glycerone phosphate from D-glucose: step 3/4. Its function is as follows. Structural subunit of pyrophosphate--fructose 6-phosphate 1-phosphotransferase. Not required for catalytic activity. Fine-tunes allosteric regulation of the ATP-PFK by ATP, fructose 2,6-bisphosphate and AMP. This Komagataella pastoris (Yeast) protein is ATP-dependent 6-phosphofructokinase subunit gamma (PFK3).